The sequence spans 772 residues: Mitochondrial intermediate peptidase (772 aa).

The N-terminal 37 residues, Met-1–Thr-37, are a transit peptide targeting the mitochondrion. His-558 is a binding site for Zn(2+). The active site involves Glu-559. Zn(2+) contacts are provided by His-562 and His-565.

This sequence belongs to the peptidase M3 family. Zn(2+) serves as cofactor.

The protein resides in the mitochondrion matrix. The catalysed reaction is Release of an N-terminal octapeptide as second stage of processing of some proteins imported into the mitochondrion.. Stimulated by Fe(2+). Functionally, cleaves proteins, imported into the mitochondrion, to their mature size. While most mitochondrial precursor proteins are processed to the mature form in one step by mitochondrial processing peptidase (MPP), the sequential cleavage by MIP of an octapeptide after initial processing by MPP is a required step for a subgroup of nuclear-encoded precursor proteins destined for the matrix or the inner membrane. Cleaves precursor proteins of respiratory components, including subunits of the electron transport chain and tricarboxylic acid cycle enzymes, and components of the mitochondrial genetic machinery, including ribosomal proteins, translation factors, and proteins required for mitochondrial DNA metabolism. This is Mitochondrial intermediate peptidase (OCT1) from Saccharomyces cerevisiae (strain YJM789) (Baker's yeast).